We begin with the raw amino-acid sequence, 273 residues long: Aegyptin (273 aa).

Residues methionine 1–serine 19 form the signal peptide. Residues arginine 20–tyrosine 160 are disordered. Residues glutamate 24–glycine 62 show a composition bias toward acidic residues. Residues glutamate 63 to aspartate 86 are compositionally biased toward basic and acidic residues. The segment covering alanine 87–alanine 145 has biased composition (acidic residues). Residues glycine 137–arginine 273 are mediates binding of host collagen. Basic and acidic residues predominate over residues glutamate 146–aspartate 158. Cystine bridges form between cysteine 213/cysteine 267 and cysteine 235/cysteine 245.

The protein belongs to the aegyptin family. In terms of assembly, monomer; exhibits non-globular elongated shape in solution. As to expression, female saliva (at protein level). Adult female salivary gland (at protein level).

The protein localises to the secreted. Modulates blood feeding of female mosquitoes on vertebrate hosts. Inhibits collagen-induced platelet aggregation in the host via preventing collagen interaction with its three major ligands: glycoprotein VI, integrin alpha-2/beta-1 (ITGA2/ITGB1) and von Willebrand factor (VWF). Prevents collagen-mediated thrombus formation in the host. Binds to host collagens but not to laminin, vitronectin (VTN), fibronectin (FN1), von Willebrand factor (VWF) and fibrinogen. Influences cytokine production and populations of circulating leukocytes. Functionally, (Microbial infection) Reduces replication of dengue virus type 2 at inoculation site and viremia levels on day 2 post-inoculation. Promotes production of pro-inflammatory cytokines, such as GM-CSF (CSF2), IFN-gamma (IFNG), IL5 and IL6, in the lymph nodes of mice infected with dengue virus type 2. Increases the number of circulating eosinophils in mice infected with dengue virus type 2. Decreases the number of circulating monocytes in mice infected with dengue virus type 2. The polypeptide is Aegyptin (Aedes aegypti (Yellowfever mosquito)).